The sequence spans 962 residues: Glycine dehydrogenase (decarboxylating) (962 aa).

Residue K709 is modified to N6-(pyridoxal phosphate)lysine.

The protein belongs to the GcvP family. In terms of assembly, the glycine cleavage system is composed of four proteins: P, T, L and H. Pyridoxal 5'-phosphate serves as cofactor.

The catalysed reaction is N(6)-[(R)-lipoyl]-L-lysyl-[glycine-cleavage complex H protein] + glycine + H(+) = N(6)-[(R)-S(8)-aminomethyldihydrolipoyl]-L-lysyl-[glycine-cleavage complex H protein] + CO2. In terms of biological role, the glycine cleavage system catalyzes the degradation of glycine. The P protein binds the alpha-amino group of glycine through its pyridoxal phosphate cofactor; CO(2) is released and the remaining methylamine moiety is then transferred to the lipoamide cofactor of the H protein. This is Glycine dehydrogenase (decarboxylating) from Shewanella sp. (strain MR-4).